Here is a 304-residue protein sequence, read N- to C-terminus: Probable UDP-3-O-acylglucosamine N-acyltransferase 2, mitochondrial (304 aa).

The N-terminal 47 residues, Met-1–Gln-47, are a transit peptide targeting the mitochondrion. Phe-159–Phe-161 is a binding site for UDP-N-acetyl-alpha-D-glucosamine. Residues Asp-209 and Gln-213 each coordinate hexadecanoate. His-216 acts as the Proton acceptor in catalysis. UDP-N-acetyl-alpha-D-glucosamine contacts are provided by Asn-217, Ser-235, and His-253.

The protein belongs to the transferase hexapeptide repeat family. LpxD subfamily. As to quaternary structure, homotrimer.

It is found in the mitochondrion. The catalysed reaction is a UDP-3-O-[(3R)-3-hydroxyacyl]-alpha-D-glucosamine + a (3R)-hydroxyacyl-[ACP] = a UDP-2-N,3-O-bis[(3R)-3-hydroxyacyl]-alpha-D-glucosamine + holo-[ACP] + H(+). Its pathway is glycolipid biosynthesis; lipid IV(A) biosynthesis; lipid IV(A) from (3R)-3-hydroxytetradecanoyl-[acyl-carrier-protein] and UDP-N-acetyl-alpha-D-glucosamine: step 3/6. Functionally, involved in the biosynthesis of lipid A, a phosphorylated glycolipid that in bacteria anchors the lipopolysaccharide to the outer membrane of the cell. Lipid A-like molecules in plants may serve as structural components of the outer membranes of mitochondria and/or chloroplasts, or may be involved in signal transduction or plant defense responses. The sequence is that of Probable UDP-3-O-acylglucosamine N-acyltransferase 2, mitochondrial (LPXD2) from Arabidopsis thaliana (Mouse-ear cress).